Here is a 414-residue protein sequence, read N- to C-terminus: uncharacterized protein (414 aa).

The disordered stretch occupies residues 204-230; that stretch reads LVGTPAPGPNGSNSDGDSERASQDVRD. Residues 220-230 are compositionally biased toward basic and acidic residues; the sequence is DSERASQDVRD.

The protein belongs to the CdaR family.

This is an uncharacterized protein from Mycobacterium tuberculosis (strain CDC 1551 / Oshkosh).